The chain runs to 239 residues: MGVFGYLRERTPCHLTLLDPVDVGPEEVPEVLESLVKAGTDAVMVGGSTAHASQVEAVVEAIREVADVPVILFPNGPEGLAPNADAVLFMSLLNSRNTYYLIEAQVKGAPLVERFGLESIPTGYLIVGEWGTTVSVVGDARVIPFDRVEVIVAYALAAKHLGMKAVYLEAGSGAPEPVPPEVVRRVSGIGVFTIVGGGIRSPETARELAEAGADAIVTGTAVERDPDLAAEIVEAIKDL.

Mg(2+) contacts are provided by D19 and S48. Sn-glycerol 1-phosphate is bound by residues 167-173 (YLEAGSG), 197-198 (GG), and 219-220 (GT).

The protein belongs to the GGGP/HepGP synthase family. Group II subfamily. The cofactor is Mg(2+).

It localises to the cytoplasm. It catalyses the reaction sn-glycerol 1-phosphate + (2E,6E,10E)-geranylgeranyl diphosphate = sn-3-O-(geranylgeranyl)glycerol 1-phosphate + diphosphate. It functions in the pathway membrane lipid metabolism; glycerophospholipid metabolism. Prenyltransferase that catalyzes the transfer of the geranylgeranyl moiety of geranylgeranyl diphosphate (GGPP) to the C3 hydroxyl of sn-glycerol-1-phosphate (G1P). This reaction is the first ether-bond-formation step in the biosynthesis of archaeal membrane lipids. In Methanopyrus kandleri (strain AV19 / DSM 6324 / JCM 9639 / NBRC 100938), this protein is Geranylgeranylglyceryl phosphate synthase.